The following is an 842-amino-acid chain: Histidine biosynthesis trifunctional protein (842 aa).

The phosphoribosyl-AMP cyclohydrolase stretch occupies residues 1-275; that stretch reads MTFPLLPAYA…FVVEQTGVGF (275 aa). Positions 276 to 357 are phosphoribosyl-ATP pyrophosphohydrolase; it reads CHLERTSCFG…FYFALVRCAK (82 aa). The histidinol dehydrogenase stretch occupies residues 358-842; it reads YGVTLDEVER…KVRMEKLGLI (485 aa). Positions 380–403 are disordered; the sequence is KGDAKPGYTKEQPKEESKPKEVPS. Basic and acidic residues predominate over residues 390–403; the sequence is EQPKEESKPKEVPS. The Zn(2+) site is built by Gln667 and His670. Residues Glu736 and His737 contribute to the active site. Asp769 and His828 together coordinate Zn(2+).

The protein in the C-terminal section; belongs to the histidinol dehydrogenase family. It depends on Zn(2+) as a cofactor.

The catalysed reaction is 1-(5-phospho-beta-D-ribosyl)-5'-AMP + H2O = 1-(5-phospho-beta-D-ribosyl)-5-[(5-phospho-beta-D-ribosylamino)methylideneamino]imidazole-4-carboxamide. It carries out the reaction 1-(5-phospho-beta-D-ribosyl)-ATP + H2O = 1-(5-phospho-beta-D-ribosyl)-5'-AMP + diphosphate + H(+). The enzyme catalyses L-histidinol + 2 NAD(+) + H2O = L-histidine + 2 NADH + 3 H(+). The protein operates within amino-acid biosynthesis; L-histidine biosynthesis; L-histidine from 5-phospho-alpha-D-ribose 1-diphosphate: step 2/9. It functions in the pathway amino-acid biosynthesis; L-histidine biosynthesis; L-histidine from 5-phospho-alpha-D-ribose 1-diphosphate: step 3/9. Its pathway is amino-acid biosynthesis; L-histidine biosynthesis; L-histidine from 5-phospho-alpha-D-ribose 1-diphosphate: step 9/9. The protein is Histidine biosynthesis trifunctional protein (HIS4) of Komagataella pastoris (Yeast).